Reading from the N-terminus, the 270-residue chain is Putative pyruvate, phosphate dikinase regulatory protein (270 aa).

148–155 (GISRTSKT) contacts ADP.

This sequence belongs to the pyruvate, phosphate/water dikinase regulatory protein family. PDRP subfamily.

The catalysed reaction is N(tele)-phospho-L-histidyl/L-threonyl-[pyruvate, phosphate dikinase] + ADP = N(tele)-phospho-L-histidyl/O-phospho-L-threonyl-[pyruvate, phosphate dikinase] + AMP + H(+). It catalyses the reaction N(tele)-phospho-L-histidyl/O-phospho-L-threonyl-[pyruvate, phosphate dikinase] + phosphate + H(+) = N(tele)-phospho-L-histidyl/L-threonyl-[pyruvate, phosphate dikinase] + diphosphate. Its function is as follows. Bifunctional serine/threonine kinase and phosphorylase involved in the regulation of the pyruvate, phosphate dikinase (PPDK) by catalyzing its phosphorylation/dephosphorylation. The chain is Putative pyruvate, phosphate dikinase regulatory protein from Bacillus cereus (strain 03BB102).